Here is a 466-residue protein sequence, read N- to C-terminus: MSVVPVADVLQGRVAVDSEVTVRGWVRTRRDSKAGISFLAVYDGSCFDPVQAVINNSLPNYNEDVLRLTTGCSVIVTGKVVASPGQGQQFEIQTSKVEVAGWVEDPDTYPMAAKRHSIEYLREVAHLRPRTNLIGAVARVRHTLAQALHRFFNEQGFFWVSTPLITASDTEGAGEMFRVSTLDLENLPRNDQGKVDFDKDFFGKESFLTVSGQLNGETYACALSKIYTFGPTFRAENSNTSRHLAEFWMLEPEVAFANLNDIAGLAEAMLKYVFKAVLEERADDMKFFAERVDKDAVSRLERFIEADFAQVDYTEAVTILENCGRKFENPVYWGVDLSSEHERYLAEEHFKAPVVVKNYPKDIKAFYMRLNEDGKTVAAMDVLAPGIGEIIGGSQREERLDVLDERMLEMGLNKEDYWWYRDLRRYGTVPHSGFGLGFERLIAYVTGVQNVRDVIPFPRTPRNASF.

The protein belongs to the class-II aminoacyl-tRNA synthetase family. As to quaternary structure, homodimer.

It localises to the cytoplasm. It carries out the reaction tRNA(Asn) + L-asparagine + ATP = L-asparaginyl-tRNA(Asn) + AMP + diphosphate + H(+). The polypeptide is Asparagine--tRNA ligase (Escherichia coli O157:H7).